The sequence spans 124 residues: LOB domain-containing protein 9 (124 aa).

Positions 11–113 (APCALCTTKN…IYLNELKEKI (103 aa)) constitute an LOB domain.

Belongs to the LOB domain-containing protein family.

The chain is LOB domain-containing protein 9 (LBD9) from Arabidopsis thaliana (Mouse-ear cress).